The following is a 226-amino-acid chain: Urease accessory protein UreF (226 aa).

Belongs to the UreF family. As to quaternary structure, ureD, UreF and UreG form a complex that acts as a GTP-hydrolysis-dependent molecular chaperone, activating the urease apoprotein by helping to assemble the nickel containing metallocenter of UreC. The UreE protein probably delivers the nickel.

Its subcellular location is the cytoplasm. Its function is as follows. Required for maturation of urease via the functional incorporation of the urease nickel metallocenter. The polypeptide is Urease accessory protein UreF (Burkholderia ambifaria (strain ATCC BAA-244 / DSM 16087 / CCUG 44356 / LMG 19182 / AMMD) (Burkholderia cepacia (strain AMMD))).